The chain runs to 177 residues: Large ribosomal subunit protein uL6 (177 aa).

This sequence belongs to the universal ribosomal protein uL6 family. As to quaternary structure, part of the 50S ribosomal subunit.

In terms of biological role, this protein binds to the 23S rRNA, and is important in its secondary structure. It is located near the subunit interface in the base of the L7/L12 stalk, and near the tRNA binding site of the peptidyltransferase center. This Dichelobacter nodosus (strain VCS1703A) protein is Large ribosomal subunit protein uL6.